The primary structure comprises 91 residues: Large ribosomal subunit protein bL31B (91 aa).

This sequence belongs to the bacterial ribosomal protein bL31 family. Type B subfamily. Part of the 50S ribosomal subunit.

The chain is Large ribosomal subunit protein bL31B from Neisseria gonorrhoeae (strain ATCC 700825 / FA 1090).